The sequence spans 218 residues: Ras-related protein R-Ras (218 aa).

A disordered region spans residues 1-30 (MSSGAASGTGRGRPRGGGPGPGDPPPSETH). Positions 7–20 (SGTGRGRPRGGGPG) are enriched in gly residues. 36–44 (GGGGVGKSA) is a GTP binding site. The short motif at 58-66 (YDPTIEDSY) is the Effector region element. GTP contacts are provided by residues 83–87 (DTAGQ), 142–145 (NKAD), and 172–174 (SAK). C215 bears the Cysteine methyl ester mark. A lipid anchor (S-geranylgeranyl cysteine) is attached at C215. A propeptide spans 216 to 218 (VLL) (removed in mature form).

The protein belongs to the small GTPase superfamily. Ras family. As to quaternary structure, interacts with PLCE1. Interacts (active GTP-bound form preferentially) with RGS14. Interacts with OSBPL3. Interacts with ZDHHC19. S-palmitoylated by ZDHHC19, leading to increased association with membranes and with rafts/caveolae as well as enhanced cell viability.

The protein resides in the cell membrane. The enzyme catalyses GTP + H2O = GDP + phosphate + H(+). Its function is as follows. GTP-binding protein with GTPase activity, likely involved in the regulation of MAPK signaling pathway and thereby controlling multiple cellular processes. Regulates the organization of the actin cytoskeleton. With OSPBL3, modulates integrin beta-1 (ITGB1) activity. This Homo sapiens (Human) protein is Ras-related protein R-Ras (RRAS).